The primary structure comprises 352 residues: Ion-translocating oxidoreductase complex subunit D (352 aa).

Helical transmembrane passes span 20–40 (IMLL…CFFG), 42–62 (GTLV…ALVL), 89–109 (IPPL…VIIA), and 123–143 (PAMI…TSWL). FMN phosphoryl threonine is present on threonine 187. 5 consecutive transmembrane segments (helical) span residues 215 to 235 (LAGA…VWLL), 242 to 262 (WHIP…GWLF), 267 to 287 (LAAP…FFIL), 301 to 321 (LIFG…GGYP), and 322 to 342 (DGVA…DYYT).

It belongs to the NqrB/RnfD family. In terms of assembly, the complex is composed of six subunits: RsxA, RsxB, RsxC, RsxD, RsxE and RsxG. The cofactor is FMN.

It is found in the cell inner membrane. Part of a membrane-bound complex that couples electron transfer with translocation of ions across the membrane. Required to maintain the reduced state of SoxR. The protein is Ion-translocating oxidoreductase complex subunit D of Escherichia coli O7:K1 (strain IAI39 / ExPEC).